The following is a 431-amino-acid chain: Glucose-1-phosphate adenylyltransferase (431 aa).

K39 is a beta-D-fructose 1,6-bisphosphate binding site. AMP is bound by residues R40, H46, and R52. Y114 is an alpha-D-glucose 1-phosphate binding site. Position 130 (R130) interacts with AMP. Alpha-D-glucose 1-phosphate is bound by residues G179, 194 to 195, and S212; that span reads EK. Positions 370 and 386 each coordinate AMP. Residues 419 to 423 and 429 to 431 each bind beta-D-fructose 1,6-bisphosphate; these read REMLR and QER.

The protein belongs to the bacterial/plant glucose-1-phosphate adenylyltransferase family. In terms of assembly, homotetramer.

It carries out the reaction alpha-D-glucose 1-phosphate + ATP + H(+) = ADP-alpha-D-glucose + diphosphate. The protein operates within glycan biosynthesis; glycogen biosynthesis. With respect to regulation, allosterically activated by fructose-1,6-bisphosphate (F16BP) and inhibited by AMP. Involved in the biosynthesis of ADP-glucose, a building block required for the elongation reactions to produce glycogen. Catalyzes the reaction between ATP and alpha-D-glucose 1-phosphate (G1P) to produce pyrophosphate and ADP-Glc. The polypeptide is Glucose-1-phosphate adenylyltransferase (Shigella dysenteriae serotype 1 (strain Sd197)).